We begin with the raw amino-acid sequence, 113 residues long: Sporulation membrane protein YtrH (113 aa).

Helical transmembrane passes span 16-36 (FIALGVLIGGALIGGLGAYLA), 51-71 (LKIWALVAAIGGTFDAVYSFE), and 86-106 (LLLIISAMGGAQSGWLIISWL).

The protein resides in the forespore outer membrane. Functionally, involved in sporulation. May contribute to cortex formation or stability. The chain is Sporulation membrane protein YtrH (ytrH) from Bacillus subtilis (strain 168).